The sequence spans 328 residues: Fructosamine deglycase FrlB (328 aa).

SIS domains follow at residues 15–153 and 181–311; these read FLQD…VLEN and NAKQ…ELAE.

In terms of assembly, homooctamer.

Its function is as follows. Catalyzes the conversion of a range of fructosamine 6-phosphates to glucose 6-phosphate and a free amino acid. This is Fructosamine deglycase FrlB (frlB) from Bacillus subtilis (strain 168).